Reading from the N-terminus, the 164-residue chain is HTH-type transcriptional regulator IscR (164 aa).

An HTH rrf2-type domain is found at 2–131 (RLTSKGRYAV…NNITLGELVN (130 aa)). A DNA-binding region (H-T-H motif) is located at residues 28 to 51 (LADISERQGISLSYLEQLFSRLRK). [2Fe-2S] cluster contacts are provided by Cys92, Cys98, and Cys104.

[2Fe-2S] cluster is required as a cofactor.

Its function is as follows. Regulates the transcription of several operons and genes involved in the biogenesis of Fe-S clusters and Fe-S-containing proteins. The chain is HTH-type transcriptional regulator IscR from Salmonella agona (strain SL483).